The following is a 292-amino-acid chain: Formamidopyrimidine-DNA glycosylase (292 aa).

Residue Pro-2 is the Schiff-base intermediate with DNA of the active site. Glu-3 acts as the Proton donor in catalysis. Lys-61 serves as the catalytic Proton donor; for beta-elimination activity. The DNA site is built by His-103, Arg-122, and Lys-168. The FPG-type zinc finger occupies 254-288 (DAYGREGEHCRRCGAVMRREKFMNRSSFYCPRCQP). Arg-278 acts as the Proton donor; for delta-elimination activity in catalysis.

Belongs to the FPG family. As to quaternary structure, monomer. It depends on Zn(2+) as a cofactor.

The enzyme catalyses Hydrolysis of DNA containing ring-opened 7-methylguanine residues, releasing 2,6-diamino-4-hydroxy-5-(N-methyl)formamidopyrimidine.. It catalyses the reaction 2'-deoxyribonucleotide-(2'-deoxyribose 5'-phosphate)-2'-deoxyribonucleotide-DNA = a 3'-end 2'-deoxyribonucleotide-(2,3-dehydro-2,3-deoxyribose 5'-phosphate)-DNA + a 5'-end 5'-phospho-2'-deoxyribonucleoside-DNA + H(+). Its function is as follows. Involved in base excision repair of DNA damaged by oxidation or by mutagenic agents. Acts as a DNA glycosylase that recognizes and removes damaged bases. Has a preference for oxidized purines, such as 7,8-dihydro-8-oxoguanine (8-oxoG). Has AP (apurinic/apyrimidinic) lyase activity and introduces nicks in the DNA strand. Cleaves the DNA backbone by beta-delta elimination to generate a single-strand break at the site of the removed base with both 3'- and 5'-phosphates. The protein is Formamidopyrimidine-DNA glycosylase of Mycobacterium ulcerans (strain Agy99).